The chain runs to 476 residues: MSPQTETKASVGFKAGVKDYKLTYYTPEYETKDTDILAAFRVTPQPGVPPEEAGAAVAAESSTGTWTTVWTDGLTSLDRYKGRCYHIEPVPGEADQYICYIAYPLDLFEEGSVTNMFTSIVGNVFGFKRSRALRLEDLRIPPAYAKTFQGPPHGIQVERDKLNKYGRPLLGCTIKPKLGLSAKNYGRACYECLRGGLDFTKDDENVNSQPFMRWRDRFVFCAEAIYKAQAETGEIKGHYLNATAGTCEEMIKRAAFARELGVPIVMHDYLTGGFTANTSLSYYCRDNGLLLHIHRAMHAVIDRQKNHGMHFRVLAKALRMSGGDHIHSGTVVGKLEGEREITLGFVDLLRDDFIEKDRSRGIFFTQDWASMPGVIPVASGGIHVWHMPALTEIFGDDSVLQFGGGTLGHPWGNAPGTAANRVALEACVQARNEGRDLAREGNEIIKAACKWSPELAAACEVWKEIKFEGSKAMDTL.

Residues 1–2 (MS) constitute a propeptide that is removed on maturation. Residue proline 3 is modified to N-acetylproline. Lysine 14 is subject to N6,N6,N6-trimethyllysine. Residues asparagine 123 and threonine 173 each coordinate substrate. Lysine 175 functions as the Proton acceptor in the catalytic mechanism. Position 177 (lysine 177) interacts with substrate. Mg(2+) contacts are provided by lysine 201, aspartate 203, and glutamate 204. Lysine 201 carries the post-translational modification N6-carboxylysine. The active-site Proton acceptor is the histidine 294. The substrate site is built by arginine 295, histidine 327, and serine 379.

It belongs to the RuBisCO large chain family. Type I subfamily. In terms of assembly, heterohexadecamer of 8 large chains and 8 small chains; disulfide-linked. The disulfide link is formed within the large subunit homodimers. Requires Mg(2+) as cofactor. In terms of processing, the disulfide bond which can form in the large chain dimeric partners within the hexadecamer appears to be associated with oxidative stress and protein turnover.

Its subcellular location is the plastid. The protein localises to the chloroplast. It carries out the reaction 2 (2R)-3-phosphoglycerate + 2 H(+) = D-ribulose 1,5-bisphosphate + CO2 + H2O. The catalysed reaction is D-ribulose 1,5-bisphosphate + O2 = 2-phosphoglycolate + (2R)-3-phosphoglycerate + 2 H(+). Functionally, ruBisCO catalyzes two reactions: the carboxylation of D-ribulose 1,5-bisphosphate, the primary event in carbon dioxide fixation, as well as the oxidative fragmentation of the pentose substrate in the photorespiration process. Both reactions occur simultaneously and in competition at the same active site. This chain is Ribulose bisphosphate carboxylase large chain, found in Setaria italica (Foxtail millet).